The primary structure comprises 332 residues: Cell growth regulator with RING finger domain protein 1 (332 aa).

The RING-type zinc finger occupies 274–309; sequence CVVCQNGTVNWVLLPCRHTCLCDGCVKYFQQCPMCR.

In terms of tissue distribution, ubiquitously expressed with high expression in testis and the cerebellum.

It localises to the nucleus. It is found in the endoplasmic reticulum. In terms of biological role, able to inhibit growth in several cell lines. The protein is Cell growth regulator with RING finger domain protein 1 (CGRRF1) of Homo sapiens (Human).